The primary structure comprises 321 residues: MKQVSLVGDVGGTNARLALCDLETGSISHSLTYSGLDYPSLEAVVRVYLDQQSLRIEQACIGIACPIDGDQVSMTNHSWAFSIKQMQENLGLKKLTIINDFTAVSMAIPVLGADDKVQLGGGLARSGKPIAVYGAGTGLGVAHLVQSCDRWLSLPGEGGHVDMASCTEQEDALIQQLRLELGHVSAERLLSGPGLVNIYKGLVTSDHRVPEILTPKQISDRALSGECHDCHRALSLFCVLMGRFAGNLALNLGTFGGVYIAGGLVPRFLEFFKASGFREAFADKGRFKEHLEAIPVYVITHSQPGLLGAGAYLRQSLGITL.

8 to 13 (GDVGGT) is an ATP binding site.

The protein belongs to the bacterial glucokinase family.

The protein resides in the cytoplasm. It catalyses the reaction D-glucose + ATP = D-glucose 6-phosphate + ADP + H(+). In Psychromonas ingrahamii (strain DSM 17664 / CCUG 51855 / 37), this protein is Glucokinase.